We begin with the raw amino-acid sequence, 452 residues long: MAAATLLRATPRFSGLCASPTPFLQGRLRPLKAPASPFLCRGLAVEAKKTYVRDKPHVNVGTIGHVDHGKTTLTAAITKILAEGGGAKFKKYEEIDNAPEERARGITINAAHVEYSTAARHYAHTDCPGHADYVKNMITGTAPLDGCILVVAANDGPMPQTREHLLLAKQIGVEHVVVYVNKADAVQDSEMVELVELEIRELLTEFGYKGEETPVIVGSALCALEQRDPELGVKSVQKLLDAVDTYIPVPTRDLDKPFLLPVESVYSIPGRGTVVTGTLERGILKKGDECELLGHNKNIRTVVTGIEMFHKSLERAEAGDNLGALVRGLKREDLRRGLVMVKPGSIQPHQKVEAQVYILSKEEGGRHKPFVSHFMPVMFSLTWDMACRVILPPGKELAMPGEDLKLSLILRQPMILEKGQRFTLRDGNKTIGTGLVTDVPAMTEEDKNIKWS.

The N-terminal 43 residues, 1–43 (MAAATLLRATPRFSGLCASPTPFLQGRLRPLKAPASPFLCRGL), are a transit peptide targeting the mitochondrion. A tr-type G domain is found at 55–251 (KPHVNVGTIG…AVDTYIPVPT (197 aa)). The tract at residues 64–71 (GHVDHGKT) is G1. Aspartate 67, glycine 69, lysine 70, threonine 71, and threonine 72 together coordinate GTP. Threonine 71 serves as a coordination point for Mg(2+). The residue at position 79 (lysine 79) is an N6-acetyllysine. N6-acetyllysine; alternate is present on lysine 88. The residue at position 88 (lysine 88) is an N6-succinyllysine; alternate. The tract at residues 105–109 (GITIN) is G2. Residues 126 to 129 (DCPG) form a G3 region. GTP contacts are provided by asparagine 181, aspartate 184, serine 219, alanine 220, and leucine 221. A G4 region spans residues 181–184 (NKAD). The segment at 219-221 (SAL) is G5. Lysine 234 carries the post-translational modification N6-succinyllysine. At lysine 256 the chain carries N6-acetyllysine. The residue at position 278 (threonine 278) is a Phosphothreonine. The residue at position 286 (lysine 286) is an N6-succinyllysine. Serine 312 carries the phosphoserine modification. An N6-acetyllysine mark is found at lysine 361 and lysine 418.

This sequence belongs to the TRAFAC class translation factor GTPase superfamily. Classic translation factor GTPase family. EF-Tu/EF-1A subfamily. In terms of assembly, interacts with NLRX1. Interacts with ATG16L1.

It localises to the mitochondrion. The enzyme catalyses GTP + H2O = GDP + phosphate + H(+). Its function is as follows. GTP hydrolase that promotes the GTP-dependent binding of aminoacyl-tRNA to the A-site of ribosomes during protein biosynthesis. Also plays a role in the regulation of autophagy and innate immunity. Recruits ATG5-ATG12 and NLRX1 at mitochondria and serves as a checkpoint of the RIGI-MAVS pathway. In turn, inhibits RLR-mediated type I interferon while promoting autophagy. This is Elongation factor Tu, mitochondrial (Tufm) from Mus musculus (Mouse).